Here is a 325-residue protein sequence, read N- to C-terminus: Diacylglycerol acyltransferase/mycolyltransferase Ag85B (325 aa).

The first 38 residues, 1-38 (MTFIDKIRGHWARRMTVAAVAALLLPGLVGVVGGSATA), serve as a signal peptide directing secretion. 82 to 83 (LR) is a substrate binding site. The fibronectin-binding stretch occupies residues 98-108 (FEMFLDSGLSV). A disulfide bond links Cys127 and Cys132. Ser166 is a substrate binding site. Ser166 serves as the catalytic Nucleophile. Glu272 is a catalytic residue. Residues 274–277 (LTIR) and 304–306 (HNW) contribute to the substrate site. His304 is a catalytic residue.

Belongs to the mycobacterial A85 antigen family.

The protein localises to the secreted. It catalyses the reaction 2 alpha,alpha'-trehalose 6-mycolate = alpha,alpha'-trehalose 6,6'-bismycolate + alpha,alpha-trehalose. It carries out the reaction an acyl-CoA + a 1,2-diacyl-sn-glycerol = a triacyl-sn-glycerol + CoA. The antigen 85 proteins (FbpA, FbpB, FbpC) are responsible for the high affinity of mycobacteria for fibronectin, a large adhesive glycoprotein. They also help to maintain the integrity of the cell wall by catalyzing the transfer of mycolic acids to cell wall arabinogalactan and through the synthesis of alpha,alpha-trehalose dimycolate (TDM, cord factor). They catalyze the transfer of a mycoloyl residue from one molecule of alpha,alpha-trehalose monomycolate (TMM) to another TMM, leading to the formation of TDM. The protein is Diacylglycerol acyltransferase/mycolyltransferase Ag85B (fbpB) of Mycolicibacterium smegmatis (strain ATCC 700084 / mc(2)155) (Mycobacterium smegmatis).